Consider the following 399-residue polypeptide: Glutathione S-transferase LANCL1 (399 aa).

Residue A2 is modified to N-acetylalanine. K142 is subject to N6-acetyllysine. C276 contacts Zn(2+). K317 contacts glutathione. The Zn(2+) site is built by C322 and H323. A glutathione-binding site is contributed by 364 to 367; the sequence is RTAD.

Belongs to the LanC-like protein family. Interacts with the C-terminal of STOM. Interacts with the EPS8 SH3 domain. Interaction with EPS8 is inhibited by glutathione binding. Detected in spinal cord (at protein level). Ubiquitous. Strongly expressed in brain, testis, alveolar macrophages and epithelial cells of the lung, kidney and intestine. Expression in brain increases during the first postnatal month and remaining high in adult.

The protein localises to the cytoplasm. It localises to the cell membrane. The enzyme catalyses RX + glutathione = an S-substituted glutathione + a halide anion + H(+). It carries out the reaction 1-chloro-2,4-dinitrobenzene + glutathione = 2,4-dinitrophenyl-S-glutathione + chloride + H(+). Functions as a glutathione transferase. Catalyzes conjugation of the glutathione (GSH) to artificial substrates 1-chloro-2,4-dinitrobenzene (CDNB) and p-nitrophenyl acetate. Mitigates neuronal oxidative stress during normal postnatal development and in response to oxidative stresses probably through GSH antioxidant defense mechanism. May play a role in EPS8 signaling. Binds glutathione. This chain is Glutathione S-transferase LANCL1, found in Mus musculus (Mouse).